A 36-amino-acid chain; its full sequence is U14-ctenitoxin-Co1b (36 aa).

Expressed by the venom gland.

The protein localises to the secreted. Not toxic to mice by intracerebroventricular injection. This Ctenus ornatus (Brazilian spider) protein is U14-ctenitoxin-Co1b.